The chain runs to 550 residues: MEDAKNIKKGPAPFYPLEDGTAGEQLHKAMKRYALVPGTIAFTDAHIEVNITYAEYFEMSVRLAEAMKRYGLNTNHRIVVCSENSLQFFMPVLGALFIGVAVAPANDIYNERELLNSMNISQPTVVFVSKKGLQKILNVQKKLPIIQKIIIMDSKTDYQGFQSMYTFVTSHLPPGFNEYDFVPESFDRDKTIALIMNSSGSTGLPKGVALPHRTACVRFSHARDPIFGNQIIPDTAILSVVPFHHGFGMFTTLGYLICGFRVVLMYRFEEELFLRSLQDYKIQSALLVPTLFSFFAKSTLIDKYDLSNLHEIASGGAPLSKEVGEAVAKRFHLPGIRQGYGLTETTSAILITPEGDDKPGAVGKVVPFFEAKVVDLDTGKTLGVNQRGELCVRGPMIMSGYVNNPEATNALIDKDGWLHSGDIAYWDEDEHFFIVDRLKSLIKYKGYQVAPAELESILLQHPNIFDAGVAGLPDDDAGELPAAVVVLEHGKTMTEKEIVDYVASQVTTAKKLRGGVVFVDEVPKGLTGKLDARKIREILIKAKKGGKSKL.

Residues S548–L550 carry the Microbody targeting signal motif.

It belongs to the ATP-dependent AMP-binding enzyme family. Mg(2+) serves as cofactor.

It is found in the peroxisome. The catalysed reaction is firefly D-luciferin + ATP + O2 = firefly oxyluciferin + hnu + AMP + CO2 + diphosphate. Functionally, produces green light with a wavelength of 562 nm. This chain is Luciferin 4-monooxygenase, found in Photinus pyralis (Common eastern firefly).